A 189-amino-acid polypeptide reads, in one-letter code: Elongation factor P (189 aa).

It belongs to the elongation factor P family.

The protein resides in the cytoplasm. It participates in protein biosynthesis; polypeptide chain elongation. Functionally, involved in peptide bond synthesis. Stimulates efficient translation and peptide-bond synthesis on native or reconstituted 70S ribosomes in vitro. Probably functions indirectly by altering the affinity of the ribosome for aminoacyl-tRNA, thus increasing their reactivity as acceptors for peptidyl transferase. The protein is Elongation factor P of Orientia tsutsugamushi (strain Boryong) (Rickettsia tsutsugamushi).